Reading from the N-terminus, the 842-residue chain is Protein translocase subunit SecA (842 aa).

ATP contacts are provided by residues glutamine 85, 103–107 (GEGKT), and aspartate 493. Zn(2+)-binding residues include cysteine 825, cysteine 827, cysteine 836, and histidine 837.

It belongs to the SecA family. Monomer and homodimer. Part of the essential Sec protein translocation apparatus which comprises SecA, SecYEG and auxiliary proteins SecDF. Other proteins may also be involved. The cofactor is Zn(2+).

The protein resides in the cell membrane. It localises to the cytoplasm. The enzyme catalyses ATP + H2O + cellular proteinSide 1 = ADP + phosphate + cellular proteinSide 2.. Part of the Sec protein translocase complex. Interacts with the SecYEG preprotein conducting channel. Has a central role in coupling the hydrolysis of ATP to the transfer of proteins into and across the cell membrane, serving as an ATP-driven molecular motor driving the stepwise translocation of polypeptide chains across the membrane. This Streptococcus uberis (strain ATCC BAA-854 / 0140J) protein is Protein translocase subunit SecA.